We begin with the raw amino-acid sequence, 438 residues long: Putative F-box/FBD/LRR-repeat protein At2g05300 (438 aa).

Residues 13-59 (EDRISQLPDPLLTQILNLLPTEEAVKTSVLSTRWRTLWLWVPNLELS) enclose the F-box domain. LRR repeat units follow at residues 135 to 166 (CDSL…RLKD), 167 to 192 (IVFH…KIDV), 235 to 261 (CLII…DISL), and 318 to 346 (YVTL…ILER). In terms of domain architecture, FBD spans 362–409 (SMSSVPECLLTSLEFVEFKAPICGLGPEMMLVWYFLKNSPTLKKLTLP).

The sequence is that of Putative F-box/FBD/LRR-repeat protein At2g05300 from Arabidopsis thaliana (Mouse-ear cress).